We begin with the raw amino-acid sequence, 429 residues long: ATP-dependent RNA helicase RhlB (429 aa).

A Q motif motif is present at residues 9–37 (DKFAQMGLEPEVLAGLESKGFHYCTPIQA). The Helicase ATP-binding domain maps to 40–219 (LPLLVEGHDL…YEHMNHPEHV (180 aa)). 53 to 60 (AQTGTGKT) is an ATP binding site. Positions 165 to 168 (DEAD) match the DEAD box motif. Residues 243-390 (KMLLLLSLME…VSKYDREALL (148 aa)) form the Helicase C-terminal domain. The disordered stretch occupies residues 399-429 (VFRNRQPVNRNMRDRQGGGNSNNRRRPPRKS).

This sequence belongs to the DEAD box helicase family. RhlB subfamily. As to quaternary structure, component of the RNA degradosome, which is a multiprotein complex involved in RNA processing and mRNA degradation.

The protein localises to the cytoplasm. The enzyme catalyses ATP + H2O = ADP + phosphate + H(+). Its function is as follows. DEAD-box RNA helicase involved in RNA degradation. Has RNA-dependent ATPase activity and unwinds double-stranded RNA. The polypeptide is ATP-dependent RNA helicase RhlB (Aeromonas hydrophila subsp. hydrophila (strain ATCC 7966 / DSM 30187 / BCRC 13018 / CCUG 14551 / JCM 1027 / KCTC 2358 / NCIMB 9240 / NCTC 8049)).